Here is a 122-residue protein sequence, read N- to C-terminus: Basic phospholipase A2 Cdr-13 (122 aa).

Intrachain disulfides connect cysteine 26–cysteine 115, cysteine 28–cysteine 44, cysteine 43–cysteine 95, cysteine 49–cysteine 122, cysteine 50–cysteine 88, cysteine 57–cysteine 81, and cysteine 75–cysteine 86. Residues tyrosine 27, glycine 29, and glycine 31 each contribute to the Ca(2+) site. The active site involves histidine 47. Ca(2+) is bound at residue aspartate 48. Aspartate 89 is a catalytic residue.

The cofactor is Ca(2+). Expressed by the venom gland.

Its subcellular location is the secreted. The enzyme catalyses a 1,2-diacyl-sn-glycero-3-phosphocholine + H2O = a 1-acyl-sn-glycero-3-phosphocholine + a fatty acid + H(+). In terms of biological role, snake venom phospholipase A2 (PLA2) that induces myonecrosis and edema upon subcutaneous injections in mice. In vitro, causes a potent blockade of neuromuscular transmission in young chicken biventer cervicis preparation and produces cytotoxicity in murine C2C12 skeletal muscle myotubes and lack cytolytic activity upon myoblasts in vitro. PLA2 catalyzes the calcium-dependent hydrolysis of the 2-acyl groups in 3-sn-phosphoglycerides. The polypeptide is Basic phospholipase A2 Cdr-13 (Crotalus durissus ruruima (South American rattlesnake)).